The primary structure comprises 219 residues: Antigen 5 like allergen Cul n 1 (219 aa).

The first 19 residues, 1-19 (MIKKLSIVILFSCISFVLS), serve as a signal peptide directing secretion. 3 disulfide bridges follow: Cys-23/Cys-45, Cys-28/Cys-124, and Cys-55/Cys-117. Residues 73–211 (LKVHNRLRNK…RHSGNKYFFW (139 aa)) form the SCP domain.

Belongs to the CRISP family. Expressed in salivary glands.

The protein localises to the secreted. This Culicoides nubeculosus (Biting midge) protein is Antigen 5 like allergen Cul n 1.